Consider the following 285-residue polypeptide: Energy-coupling factor transporter ATP-binding protein EcfA2 (285 aa).

An ABC transporter domain is found at 3–245 (IKFKKVDYIY…RKWLKKHNLS (243 aa)). 40-47 (GHTGSGKS) is a binding site for ATP.

This sequence belongs to the ABC transporter superfamily. Energy-coupling factor EcfA family. In terms of assembly, forms a stable energy-coupling factor (ECF) transporter complex composed of 2 membrane-embedded substrate-binding proteins (S component), 2 ATP-binding proteins (A component) and 2 transmembrane proteins (T component).

It is found in the cell membrane. Functionally, ATP-binding (A) component of a common energy-coupling factor (ECF) ABC-transporter complex. Unlike classic ABC transporters this ECF transporter provides the energy necessary to transport a number of different substrates. The protein is Energy-coupling factor transporter ATP-binding protein EcfA2 of Lactobacillus acidophilus (strain ATCC 700396 / NCK56 / N2 / NCFM).